Here is an 88-residue protein sequence, read N- to C-terminus: Small ribosomal subunit protein bS20 (88 aa).

Residues 1 to 25 (MANSAQARKRARQATKARAHNASLR) form a disordered region. Residues 7–19 (ARKRARQATKARA) are compositionally biased toward basic residues.

It belongs to the bacterial ribosomal protein bS20 family.

Functionally, binds directly to 16S ribosomal RNA. The sequence is that of Small ribosomal subunit protein bS20 from Azoarcus sp. (strain BH72).